The chain runs to 886 residues: KH domain-containing protein hrpk-2 (886 aa).

Basic and acidic residues predominate over residues 359-368; sequence DNHFYNDKDS. The tract at residues 359 to 433 is disordered; that stretch reads DNHFYNDKDS…SHRKESACVD (75 aa). Composition is skewed to basic residues over residues 369–388 and 415–425; these read GKHH…KKHY and HERKKRQRSSH. KH domains lie at 698 to 761 and 775 to 839; these read KETV…IEKI and PGIF…AYLT.

This is KH domain-containing protein hrpk-2 from Caenorhabditis elegans.